The following is a 285-amino-acid chain: Glycine--tRNA ligase alpha subunit (285 aa).

The protein belongs to the class-II aminoacyl-tRNA synthetase family. As to quaternary structure, tetramer of two alpha and two beta subunits.

Its subcellular location is the cytoplasm. It catalyses the reaction tRNA(Gly) + glycine + ATP = glycyl-tRNA(Gly) + AMP + diphosphate. The protein is Glycine--tRNA ligase alpha subunit of Granulibacter bethesdensis (strain ATCC BAA-1260 / CGDNIH1).